Here is a 399-residue protein sequence, read N- to C-terminus: Elongation factor Tu (399 aa).

The 198-residue stretch at 10–207 folds into the tr-type G domain; it reads KPHMNVGTIG…AMDTYFPDPV (198 aa). The tract at residues 19–26 is G1; sequence GQIDHGKT. Residue 19-26 coordinates GTP; that stretch reads GQIDHGKT. Mg(2+) is bound at residue Thr26. The G2 stretch occupies residues 60-64; sequence GITIN. Positions 81–84 are G3; sequence DCPG. Residues 81 to 85 and 136 to 139 contribute to the GTP site; these read DCPGH and NKVD. The G4 stretch occupies residues 136 to 139; that stretch reads NKVD. A G5 region spans residues 173-175; that stretch reads SAL.

It belongs to the TRAFAC class translation factor GTPase superfamily. Classic translation factor GTPase family. EF-Tu/EF-1A subfamily. In terms of assembly, monomer.

It is found in the cytoplasm. The enzyme catalyses GTP + H2O = GDP + phosphate + H(+). Its function is as follows. GTP hydrolase that promotes the GTP-dependent binding of aminoacyl-tRNA to the A-site of ribosomes during protein biosynthesis. This chain is Elongation factor Tu, found in Fervidobacterium islandicum.